The following is a 455-amino-acid chain: SH3 domain-binding protein 5 (455 aa).

A compositionally biased stretch (basic and acidic residues) spans 1 to 12 (MDAALKRSRSEE). Residues 1-63 (MDAALKRSRS…QSTDDINRRE (63 aa)) form a disordered region. Over residues 22–41 (DEEEEEEEGMEQGLEEEEEV) the composition is skewed to acidic residues. The tract at residues 31–265 (MEQGLEEEEE…EIHERRRSSA (235 aa)) is sufficient for interaction with RAB11A and for guanine nucleotide exchange activity. A compositionally biased stretch (basic and acidic residues) spans 42-51 (DPRIQGELEK). Coiled-coil stretches lie at residues 44 to 90 (RIQG…LVKK), 97 to 145 (DSKP…RLLE), 154 to 200 (AWQE…LEKK), and 211 to 255 (YFEL…MISD). Disordered regions lie at residues 259 to 293 (ERRRSSAMGPRGCGVGAEGSSTSVEDLPGSKPEPD) and 306 to 345 (SCSNFVSEDDSETQSVSSFSSGPTSPSEMPDQFPAVVRPG). The span at 306 to 317 (SCSNFVSEDDSE) shows a compositional bias: acidic residues. The segment covering 320-332 (SVSSFSSGPTSPS) has biased composition (low complexity). Serine 351 carries the post-translational modification Phosphoserine; by MAPK12 and MAPK9. The interval 369–435 (SECSGASSPE…ALENRMKQLS (67 aa)) is disordered. A phosphoserine mark is found at serine 375 and serine 376. A compositionally biased stretch (basic and acidic residues) spans 380–396 (EVERGDRAEGAENKTSD). The span at 403–421 (GLSSSSGSGGSSKSQSSTS) shows a compositional bias: low complexity. A phosphoserine mark is found at serine 418 and serine 421.

Belongs to the SH3BP5 family. In terms of assembly, interacts with BTK. Interacts with all isoforms of MAPK8, MAPK9, MAPK10 and MAPK12. Interacts with GDP-bound and nucleotide-free forms of RAB11A. In terms of tissue distribution, highly expressed in testis and ovaries. It is also expressed in a variety of tissues including spleen, lymph node, thymus, bone marrow, fetal liver, colon, small intestine and prostate.

The protein localises to the cytoplasmic vesicle membrane. The protein resides in the mitochondrion. In terms of biological role, functions as a guanine nucleotide exchange factor (GEF) with specificity for RAB11A and RAB25. Inhibits the auto- and transphosphorylation activity of BTK. Plays a negative regulatory role in BTK-related cytoplasmic signaling in B-cells. May be involved in BCR-induced apoptotic cell death. This Homo sapiens (Human) protein is SH3 domain-binding protein 5 (SH3BP5).